The chain runs to 981 residues: MLCDSSESVSFSSISKEEDTPIARLLKNAKETPDHRFISVYNERGIVAKYTYTELLRRVNTIAKFCDDLGLGKTVGIHMGHELDFLCSIFALWATGRTCVIFNQIWSQQVVRVLVKRLNISDLLYHEYKPKFEVDTLNATSLASLPLDIDAPCIRAGLEPEVALINHSSGSTGVPKSMPFLMKKYALGYDYGTPEFMNHLSTPMVMATSFALTTLSWINALYCNGNLLYPSSSISATCTSEAERLAWNVYYALRAGCERLIILPNLLVLTLQIMPDKEECFPACKLVAAGGEMVPANMYHTCKRVLPNATIYPQYGTTESGLVSFLAYNGKDTLHNKELVYFPGKTVKKLMLVTEDNEAVPEKIGCEGFVCVVTDVQSEPYVGDDAETIQSRNSTFINYDGQPAVRFADLAVWNSYKGKLGITIKGRLGRRVKRNGVFFDLKYFDQVVVGLKEVKDAFSFFIFNRFVLVYVPAYNGVDPVTLKQKLNKELRDHHLFSSCFPLADIPRNAAGKVDLKSIETYASKCLSVEDQRLPVLLNPVAIEISKIASKILQNPSLEGKDAPLYSCGLDSIHSVRFFHAIQSHFHLEGPIRYNMNSNCTPNSIASIIQKKSYNVSSITYELLNEDACALSRTIPKLSILPTNGQYFLLTGATGYFGRRFLEYLVKLNISVVCLVRESSDEAAKERLISLVPSLRISSENIIVWAAHVEEIRFGLDDAKWEFLVENVSRIYHMAAEVHWMKSYQELRPANVLGTKTVLELSVMGPKALYFISGGGQQEVELDDDTQSAKASGYALSKYVAELLCRKISDLGHPLIYVIRPGFIIANDGEILSRDFFWRFVATALRMGIWPQSDESQSLVFHISTTDALCMTLTQILEKEADAYAPLLAYDKFDGDEFACICESMKNVKLDFVTLEDWLKALEKDVDEKGEDHPLFALQHATKFALKSSMTPSNGLRNIYPLSETFLTKEAIANGLENLYIE.

Residues 535–612 enclose the Carrier domain; sequence VLLNPVAIEI…SIASIIQKKS (78 aa). Serine 571 is modified (O-(pantetheine 4'-phosphoryl)serine).

The protein belongs to the ATP-dependent AMP-binding enzyme family.

This is an uncharacterized protein from Schizosaccharomyces pombe (strain 972 / ATCC 24843) (Fission yeast).